Reading from the N-terminus, the 343-residue chain is Cytosolic Fe-S cluster assembly factor CFD1 (343 aa).

Position 15-22 (15-22) interacts with ATP; it reads GKGGVGKS. 2 stretches are compositionally biased toward polar residues: residues 80–91 and 99–110; these read PSSDGLNGSQRA and ESSSSTVETAPQ. Positions 80-110 are disordered; it reads PSSDGLNGSQRANKPDDSNESSSSTVETAPQ. [4Fe-4S] cluster-binding residues include C241 and C244.

The protein belongs to the Mrp/NBP35 ATP-binding proteins family. NUBP2/CFD1 subfamily. Heterotetramer of 2 NBP35 and 2 CFD1 chains. The cofactor is [4Fe-4S] cluster.

It is found in the cytoplasm. Component of the cytosolic iron-sulfur (Fe/S) protein assembly (CIA) machinery. Required for maturation of extramitochondrial Fe-S proteins. The NBP35-CFD1 heterotetramer forms a Fe-S scaffold complex, mediating the de novo assembly of an Fe-S cluster and its transfer to target apoproteins. The chain is Cytosolic Fe-S cluster assembly factor CFD1 from Coccidioides immitis (strain RS) (Valley fever fungus).